The sequence spans 193 residues: Acyl carrier protein phosphodiesterase (193 aa).

The protein belongs to the AcpH family.

It carries out the reaction holo-[ACP] + H2O = apo-[ACP] + (R)-4'-phosphopantetheine + H(+). In terms of biological role, converts holo-ACP to apo-ACP by hydrolytic cleavage of the phosphopantetheine prosthetic group from ACP. In Escherichia coli O127:H6 (strain E2348/69 / EPEC), this protein is Acyl carrier protein phosphodiesterase.